The chain runs to 192 residues: MTITISAVILAGGKARRMGGQDKGLQILGKQSLIEHVINRLQPQIHQISINTNRNQTEYAKFGFPVFSDELPDFQGPLSGMLTALEKTKSDFILFTPCDTPFFPMNLLDKLKSAVKNDRTLIAYACDEEREHPVFCLMSVQLKEKLRHYLASGERRLLQFMKENGGISVKFTQEEGNFENFNTLDDLKKTVI.

Residues 10 to 12, Lys-23, Asn-51, Asp-69, and Asp-99 each bind GTP; that span reads LAG. Asp-99 lines the Mg(2+) pocket.

This sequence belongs to the MobA family. As to quaternary structure, monomer. Requires Mg(2+) as cofactor.

The protein resides in the cytoplasm. It catalyses the reaction Mo-molybdopterin + GTP + H(+) = Mo-molybdopterin guanine dinucleotide + diphosphate. Transfers a GMP moiety from GTP to Mo-molybdopterin (Mo-MPT) cofactor (Moco or molybdenum cofactor) to form Mo-molybdopterin guanine dinucleotide (Mo-MGD) cofactor. This is Molybdenum cofactor guanylyltransferase from Haemophilus influenzae (strain 86-028NP).